The following is a 1135-amino-acid chain: Large proline-rich protein bag6-A (1135 aa).

The 76-residue stretch at 7–82 folds into the Ubiquitin-like domain; the sequence is MEVTVKTLDS…HLVERAPPQT (76 aa). Disordered stretches follow at residues 76–114, 194–238, 350–407, 498–522, 552–612, 661–698, 1075–1099, and 1116–1135; these read ERAP…RNGN, EQAA…SPSE, TGNG…PHPR, SFQF…VPGA, QGGS…QHLS, PVST…ESLP, KATG…EAQG, and NESY…RGDP. The span at 79-100 shows a compositional bias: low complexity; that stretch reads PPQTQPSTGGPSTSSSTSPTSS. The segment covering 212-227 has biased composition (polar residues); it reads RETLPQTTQNTDGQSN. The segment covering 228 to 237 has biased composition (low complexity); it reads TTPTSHPSPS. Polar residues predominate over residues 367–387; it reads QPPSTNTSEPQRPNTENQPPS. Composition is skewed to low complexity over residues 555-600 and 663-672; these read SSTS…SVPS and STAPTQSASQ. Residues 673–692 are compositionally biased toward pro residues; that stretch reads APPPSSPPPPPAHSSPPPAA. Positions 1087–1099 are enriched in basic and acidic residues; the sequence is CVRRELDNSEAQG. The span at 1116-1129 shows a compositional bias: polar residues; sequence NESYSAQRFPNTQR.

Component of the bag6/bat3 complex.

It is found in the cytoplasm. Its subcellular location is the cytosol. It localises to the nucleus. The protein localises to the secreted. The protein resides in the extracellular exosome. ATP-independent molecular chaperone preventing the aggregation of misfolded and hydrophobic patches-containing proteins. Functions as part of a cytosolic protein quality control complex, the bag6/bat3 complex, which maintains these client proteins in a soluble state and participates in their proper delivery to the endoplasmic reticulum or alternatively can promote their sorting to the proteasome where they undergo degradation. The bag6/bat3 complex is involved in the post-translational delivery of tail-anchored/type II transmembrane proteins to the endoplasmic reticulum membrane. Similarly, the bag6/bat3 complex also functions as a sorting platform for proteins of the secretory pathway that are mislocalized to the cytosol either delivering them to the proteasome for degradation or to the endoplasmic reticulum. The bag6/bat3 complex also plays a role in the endoplasmic reticulum-associated degradation (ERAD), a quality control mechanism that eliminates unwanted proteins of the endoplasmic reticulum through their retrotranslocation to the cytosol and their targeting to the proteasome. It maintains these retrotranslocated proteins in an unfolded yet soluble state condition in the cytosol to ensure their proper delivery to the proteasome. Also required for selective ubiquitin-mediated degradation of defective nascent chain polypeptides by the proteasome. Also involved in endoplasmic reticulum stress-induced pre-emptive quality control, a mechanism that selectively attenuates the translocation of newly synthesized proteins into the endoplasmic reticulum and reroutes them to the cytosol for proteasomal degradation. May ensure the proper degradation of these proteins and thereby protects the endoplasmic reticulum from protein overload upon stress. By stabilizing a large spectrum of proteins, may indirectly affect different biological processes including apoptosis. By controlling the steady-state expression of the IGF1R receptor, indirectly regulates the insulin-like growth factor receptor signaling pathway. Functionally, when nuclear, may also act as a component of some chromatin regulator complex. This is Large proline-rich protein bag6-A from Xenopus laevis (African clawed frog).